The chain runs to 212 residues: MSKILAIHASPRGERSHSRRLAETFLSAWQVRHPQAQVTRREVGRALIPAVNEAFVAAAFYPEPEARPLTMQADLALSDQLVGELFDHDLLLISTPMYNFNVPSGLKAWVDQIVRLGLTFDHTLDNGIAQYTPLLHGKKALIVTSRGGFGFGPGGELEALNHADPWLRTALGFIGINDVTVVAAEGEESAERTFAVSVAEAEQRLLDLARAF.

Residues serine 10, 16–18, 97–100, and 145–148 contribute to the FMN site; these read SHS, MYNF, and SRGG.

It belongs to the azoreductase type 1 family. In terms of assembly, homodimer. The cofactor is FMN.

It catalyses the reaction 2 a quinone + NADH + H(+) = 2 a 1,4-benzosemiquinone + NAD(+). It carries out the reaction N,N-dimethyl-1,4-phenylenediamine + anthranilate + 2 NAD(+) = 2-(4-dimethylaminophenyl)diazenylbenzoate + 2 NADH + 2 H(+). Its function is as follows. Quinone reductase that provides resistance to thiol-specific stress caused by electrophilic quinones. In terms of biological role, also exhibits azoreductase activity. Catalyzes the reductive cleavage of the azo bond in aromatic azo compounds to the corresponding amines. In Pseudomonas fluorescens (strain Pf0-1), this protein is FMN-dependent NADH:quinone oxidoreductase 1.